The sequence spans 219 residues: Elongation factor Ts (219 aa).

Positions 82 to 85 (TDFV) are involved in Mg(2+) ion dislocation from EF-Tu.

Belongs to the EF-Ts family.

It is found in the cytoplasm. In terms of biological role, associates with the EF-Tu.GDP complex and induces the exchange of GDP to GTP. It remains bound to the aminoacyl-tRNA.EF-Tu.GTP complex up to the GTP hydrolysis stage on the ribosome. This chain is Elongation factor Ts, found in Synechococcus sp. (strain CC9902).